The sequence spans 412 residues: Probable cystathionine gamma-synthase 2 (412 aa).

Tyrosine 76, arginine 78, glycine 106, methionine 107, tyrosine 131, serine 226, and threonine 228 together coordinate pyridoxal 5'-phosphate. At lysine 229 the chain carries N6-(pyridoxal phosphate)lysine.

The protein belongs to the trans-sulfuration enzymes family. Requires pyridoxal 5'-phosphate as cofactor.

It catalyses the reaction O-phospho-L-homoserine + L-cysteine = L,L-cystathionine + phosphate. The catalysed reaction is O-succinyl-L-homoserine + L-cysteine = L,L-cystathionine + succinate + H(+). The protein operates within amino-acid biosynthesis; L-methionine biosynthesis via de novo pathway; L-cystathionine from O-succinyl-L-homoserine: step 1/1. Catalyzes the first committed step of methionine (Met) biosynthesis. Catalyzes the formation of L-cystathionine from homoserine esters and L-cysteine, via a gamma-replacement reaction. This is Probable cystathionine gamma-synthase 2 from Arabidopsis thaliana (Mouse-ear cress).